The primary structure comprises 270 residues: Bark lectin (270 aa).

A signal peptide spans 1–15; that stretch reads ISITFFLLLLNKVNS. N-linked (GlcNAc...) asparagine glycosylation is found at N60, N76, and N127. The Mn(2+) site is built by E141 and D143. Ca(2+) contacts are provided by D143, H145, N147, and D150. Residues D150 and H155 each coordinate Mn(2+). N201 carries an N-linked (GlcNAc...) asparagine glycan.

It belongs to the leguminous lectin family.

GalNAc-specific lectin. The polypeptide is Bark lectin (Styphnolobium japonicum (Japanese pagoda tree)).